An 810-amino-acid chain; its full sequence is Bifunctional aspartokinase/homoserine dehydrogenase 2 (810 aa).

The interval 2–252 (SVIAQAGAKG…VKDACLLPLL (251 aa)) is aspartokinase. Residues 253 to 463 (RLDEASELAR…RAEKRIGLVL (211 aa)) are interface. A homoserine dehydrogenase region spans residues 464-810 (FGKGNIGSRW…SDINRLAQLL (347 aa)). NADP(+)-binding residues include asparagine 468 and isoleucine 469. 2 residues coordinate NAD(+): isoleucine 469 and valine 498. NADPH is bound at residue isoleucine 469. NADP(+)-binding residues include arginine 501, threonine 549, and lysine 573. Threonine 549 contributes to the NAD(+) binding site. The NADPH site is built by threonine 549 and lysine 573. Residues valine 603, alanine 605, and leucine 607 each contribute to the Na(+) site. Residues glycine 658 and glutamate 661 each contribute to the NADP(+) site. 2 residues coordinate L-homoserine: glutamate 661 and aspartate 672. Lysine 676 functions as the Proton donor in the catalytic mechanism. Glycine 791 serves as a coordination point for NADP(+). Glycine 791 contacts NAD(+). Position 791 (glycine 791) interacts with NADPH.

The protein in the N-terminal section; belongs to the aspartokinase family. It in the C-terminal section; belongs to the homoserine dehydrogenase family. Homotetramer. It depends on a metal cation as a cofactor.

The enzyme catalyses L-homoserine + NADP(+) = L-aspartate 4-semialdehyde + NADPH + H(+). It catalyses the reaction L-homoserine + NAD(+) = L-aspartate 4-semialdehyde + NADH + H(+). It carries out the reaction L-aspartate + ATP = 4-phospho-L-aspartate + ADP. The protein operates within amino-acid biosynthesis; L-lysine biosynthesis via DAP pathway; (S)-tetrahydrodipicolinate from L-aspartate: step 1/4. Its pathway is amino-acid biosynthesis; L-methionine biosynthesis via de novo pathway; L-homoserine from L-aspartate: step 1/3. It functions in the pathway amino-acid biosynthesis; L-methionine biosynthesis via de novo pathway; L-homoserine from L-aspartate: step 3/3. It participates in amino-acid biosynthesis; L-threonine biosynthesis; L-threonine from L-aspartate: step 1/5. The protein operates within amino-acid biosynthesis; L-threonine biosynthesis; L-threonine from L-aspartate: step 3/5. In terms of biological role, bifunctional aspartate kinase and homoserine dehydrogenase that catalyzes the first and the third steps toward the synthesis of lysine, methionine and threonine from aspartate. The chain is Bifunctional aspartokinase/homoserine dehydrogenase 2 (metL) from Escherichia coli (strain K12).